A 30-amino-acid polypeptide reads, in one-letter code: uncharacterized protein (30 aa).

The segment at 1–30 (MHLSTLPNVPWPNRSFTTKRPPLPNMSFSW) is disordered.

This is an uncharacterized protein from Saccharomyces cerevisiae (strain ATCC 204508 / S288c) (Baker's yeast).